Here is a 560-residue protein sequence, read N- to C-terminus: Arginine--tRNA ligase (560 aa).

The short motif at 121-131 is the 'HIGH' region element; the sequence is PNIAKPFSMGH.

The protein belongs to the class-I aminoacyl-tRNA synthetase family. In terms of assembly, monomer.

The protein resides in the cytoplasm. It catalyses the reaction tRNA(Arg) + L-arginine + ATP = L-arginyl-tRNA(Arg) + AMP + diphosphate. The protein is Arginine--tRNA ligase of Exiguobacterium sp. (strain ATCC BAA-1283 / AT1b).